A 175-amino-acid polypeptide reads, in one-letter code: MSKLKEYRVNRQIRAKECRLIDENGQQIGIVPIEEALKIAEEKGLDLVEIAPQAKPPVCKIMDYGKFKYELKKKEREARKKQREHQIEVKDIRMKVRIDEHDLQVKLKHMREFLEEGDKVKVWLRFRGRENIYPELGKKLAERIINELSDIAEVEVQPKKEGNFMIFVLAPKRKK.

It belongs to the IF-3 family. In terms of assembly, monomer.

The protein localises to the cytoplasm. Its function is as follows. IF-3 binds to the 30S ribosomal subunit and shifts the equilibrium between 70S ribosomes and their 50S and 30S subunits in favor of the free subunits, thus enhancing the availability of 30S subunits on which protein synthesis initiation begins. The chain is Translation initiation factor IF-3 from Aquifex aeolicus (strain VF5).